The chain runs to 356 residues: UDP-3-O-acylglucosamine N-acyltransferase (356 aa).

Residue H242 is the Proton acceptor of the active site.

This sequence belongs to the transferase hexapeptide repeat family. LpxD subfamily. In terms of assembly, homotrimer.

The catalysed reaction is a UDP-3-O-[(3R)-3-hydroxyacyl]-alpha-D-glucosamine + a (3R)-hydroxyacyl-[ACP] = a UDP-2-N,3-O-bis[(3R)-3-hydroxyacyl]-alpha-D-glucosamine + holo-[ACP] + H(+). Its pathway is bacterial outer membrane biogenesis; LPS lipid A biosynthesis. Its function is as follows. Catalyzes the N-acylation of UDP-3-O-acylglucosamine using 3-hydroxyacyl-ACP as the acyl donor. Is involved in the biosynthesis of lipid A, a phosphorylated glycolipid that anchors the lipopolysaccharide to the outer membrane of the cell. This is UDP-3-O-acylglucosamine N-acyltransferase from Acinetobacter baumannii (strain ACICU).